The chain runs to 140 residues: Organic hydroperoxide resistance protein-like (140 aa).

The protein belongs to the OsmC/Ohr family.

The protein is Organic hydroperoxide resistance protein-like of Mycoplasma genitalium (strain ATCC 33530 / DSM 19775 / NCTC 10195 / G37) (Mycoplasmoides genitalium).